The sequence spans 524 residues: Bifunctional purine biosynthesis protein PurH (524 aa).

One can recognise an MGS-like domain in the interval 1–154; it reads MTRLALLSTS…KNHAHVTVLC (154 aa).

It belongs to the PurH family.

It catalyses the reaction (6R)-10-formyltetrahydrofolate + 5-amino-1-(5-phospho-beta-D-ribosyl)imidazole-4-carboxamide = 5-formamido-1-(5-phospho-D-ribosyl)imidazole-4-carboxamide + (6S)-5,6,7,8-tetrahydrofolate. The enzyme catalyses IMP + H2O = 5-formamido-1-(5-phospho-D-ribosyl)imidazole-4-carboxamide. It participates in purine metabolism; IMP biosynthesis via de novo pathway; 5-formamido-1-(5-phospho-D-ribosyl)imidazole-4-carboxamide from 5-amino-1-(5-phospho-D-ribosyl)imidazole-4-carboxamide (10-formyl THF route): step 1/1. The protein operates within purine metabolism; IMP biosynthesis via de novo pathway; IMP from 5-formamido-1-(5-phospho-D-ribosyl)imidazole-4-carboxamide: step 1/1. In Acaryochloris marina (strain MBIC 11017), this protein is Bifunctional purine biosynthesis protein PurH.